A 428-amino-acid chain; its full sequence is 3-phosphoshikimate 1-carboxyvinyltransferase (428 aa).

3 residues coordinate 3-phosphoshikimate: Lys-19, Ser-20, and Arg-24. Lys-19 is a binding site for phosphoenolpyruvate. Positions 91 and 119 each coordinate phosphoenolpyruvate. Ser-164, Gln-166, Asp-312, and Lys-339 together coordinate 3-phosphoshikimate. Gln-166 is a phosphoenolpyruvate binding site. The active-site Proton acceptor is the Asp-312. Arg-343 and Arg-386 together coordinate phosphoenolpyruvate.

This sequence belongs to the EPSP synthase family. In terms of assembly, monomer.

It localises to the cytoplasm. The catalysed reaction is 3-phosphoshikimate + phosphoenolpyruvate = 5-O-(1-carboxyvinyl)-3-phosphoshikimate + phosphate. It participates in metabolic intermediate biosynthesis; chorismate biosynthesis; chorismate from D-erythrose 4-phosphate and phosphoenolpyruvate: step 6/7. In terms of biological role, catalyzes the transfer of the enolpyruvyl moiety of phosphoenolpyruvate (PEP) to the 5-hydroxyl of shikimate-3-phosphate (S3P) to produce enolpyruvyl shikimate-3-phosphate and inorganic phosphate. In Bacillus licheniformis (strain ATCC 14580 / DSM 13 / JCM 2505 / CCUG 7422 / NBRC 12200 / NCIMB 9375 / NCTC 10341 / NRRL NRS-1264 / Gibson 46), this protein is 3-phosphoshikimate 1-carboxyvinyltransferase.